Consider the following 351-residue polypeptide: DNA polymerase IV (351 aa).

Positions 4–185 constitute a UmuC domain; that stretch reads IIHVDMDCFF…LPLAKIPGVG (182 aa). Mg(2+) contacts are provided by D8 and D103. The active site involves E104.

It belongs to the DNA polymerase type-Y family. As to quaternary structure, monomer. Mg(2+) is required as a cofactor.

The protein resides in the cytoplasm. The catalysed reaction is DNA(n) + a 2'-deoxyribonucleoside 5'-triphosphate = DNA(n+1) + diphosphate. Functionally, poorly processive, error-prone DNA polymerase involved in untargeted mutagenesis. Copies undamaged DNA at stalled replication forks, which arise in vivo from mismatched or misaligned primer ends. These misaligned primers can be extended by PolIV. Exhibits no 3'-5' exonuclease (proofreading) activity. May be involved in translesional synthesis, in conjunction with the beta clamp from PolIII. This is DNA polymerase IV from Escherichia coli (strain ATCC 8739 / DSM 1576 / NBRC 3972 / NCIMB 8545 / WDCM 00012 / Crooks).